A 184-amino-acid polypeptide reads, in one-letter code: Trypsin/chymotrypsin inhibitor (184 aa).

2 disulfides stabilise this stretch: C39-C84 and C136-C147.

The protein belongs to the protease inhibitor I3 (leguminous Kunitz-type inhibitor) family. As to quaternary structure, homodimer.

Its function is as follows. Inhibits trypsin and alpha-chymotrypsin. The chain is Trypsin/chymotrypsin inhibitor from Alocasia macrorrhizos (Giant taro).